The sequence spans 147 residues: MVVKQQKDASKPAHFFHQVIVIALVLFVSKIIESFMPIPMPGSVIGLVLLFVLLCTGAVKLGEVEKVGTTLTNNIGLLFVPAGISVVNSLGVISQAPFLIIGLIIVSTILLLICTGYVTQIIMKVTSRSKGDKVTKKIKIEEAQAHD.

A run of 4 helical transmembrane segments spans residues 12 to 32 (PAHF…SKII), 35 to 55 (FMPI…VLLC), 74 to 94 (NIGL…GVIS), and 98 to 118 (FLII…TGYV).

It belongs to the CidA/LrgA family. LrgA subfamily.

It localises to the cell membrane. Functionally, inhibits the expression or activity of extracellular murein hydrolases by interacting, possibly with LrgB, with the holin-like proteins CidA and/or CidB. The LrgAB and CidAB proteins may affect the proton motive force of the membrane. May be involved in programmed cell death (PCD), possibly triggering PCD in response to antibiotics and environmental stresses. This Staphylococcus aureus (strain MSSA476) protein is Antiholin-like protein LrgA.